Reading from the N-terminus, the 508-residue chain is Photosystem II CP47 reaction center protein (508 aa).

The next 6 helical transmembrane spans lie at 21–36 (AVHI…WAGS), 101–115 (IVFS…IWHW), 140–156 (GIHL…FGAF), 203–218 (IAAG…FHLS), 237–252 (VLSS…AFVV), and 457–472 (TFAL…HGAR).

The protein belongs to the PsbB/PsbC family. PsbB subfamily. PSII is composed of 1 copy each of membrane proteins PsbA, PsbB, PsbC, PsbD, PsbE, PsbF, PsbH, PsbI, PsbJ, PsbK, PsbL, PsbM, PsbT, PsbX, PsbY, PsbZ, Psb30/Ycf12, at least 3 peripheral proteins of the oxygen-evolving complex and a large number of cofactors. It forms dimeric complexes. Binds multiple chlorophylls. PSII binds additional chlorophylls, carotenoids and specific lipids. serves as cofactor.

It is found in the plastid. It localises to the chloroplast thylakoid membrane. One of the components of the core complex of photosystem II (PSII). It binds chlorophyll and helps catalyze the primary light-induced photochemical processes of PSII. PSII is a light-driven water:plastoquinone oxidoreductase, using light energy to abstract electrons from H(2)O, generating O(2) and a proton gradient subsequently used for ATP formation. The polypeptide is Photosystem II CP47 reaction center protein (Agrostis stolonifera (Creeping bentgrass)).